Reading from the N-terminus, the 128-residue chain is Large ribosomal subunit protein bL20 (128 aa).

The protein belongs to the bacterial ribosomal protein bL20 family.

Binds directly to 23S ribosomal RNA and is necessary for the in vitro assembly process of the 50S ribosomal subunit. It is not involved in the protein synthesizing functions of that subunit. This is Large ribosomal subunit protein bL20 from Anaplasma phagocytophilum (strain HZ).